A 189-amino-acid chain; its full sequence is Probable nicotinate-nucleotide adenylyltransferase (189 aa).

The protein belongs to the NadD family.

It catalyses the reaction nicotinate beta-D-ribonucleotide + ATP + H(+) = deamido-NAD(+) + diphosphate. The protein operates within cofactor biosynthesis; NAD(+) biosynthesis; deamido-NAD(+) from nicotinate D-ribonucleotide: step 1/1. In terms of biological role, catalyzes the reversible adenylation of nicotinate mononucleotide (NaMN) to nicotinic acid adenine dinucleotide (NaAD). The protein is Probable nicotinate-nucleotide adenylyltransferase of Bacillus pumilus (strain SAFR-032).